Consider the following 126-residue polypeptide: Probable 4-amino-4-deoxy-L-arabinose-phosphoundecaprenol flippase subunit ArnF (126 aa).

A helical membrane pass occupies residues 1–21; sequence MGFFWALLSVGLVSAAQLLLR. The Periplasmic segment spans residues 22-47; it reads SAMVALPPLTDIVAFLQHLLHFQPGT. Residues 48-68 form a helical membrane-spanning segment; it reads FGLFFGLLGYLLSMVCWYFAL. At 69 to 76 the chain is on the cytoplasmic side; that stretch reads HRLPLSKA. A helical membrane pass occupies residues 77–97; that stretch reads YALLSLSYILVWAAAIWLPGW. The Periplasmic segment spans residues 98–100; that stretch reads HEP. Residues 101 to 121 form a helical membrane-spanning segment; the sequence is FYWQSLLGVAIIVAGVLTIFW. The Cytoplasmic portion of the chain corresponds to 122–126; it reads PVKRR.

The protein belongs to the ArnF family. Heterodimer of ArnE and ArnF.

Its subcellular location is the cell inner membrane. Its pathway is bacterial outer membrane biogenesis; lipopolysaccharide biosynthesis. Translocates 4-amino-4-deoxy-L-arabinose-phosphoundecaprenol (alpha-L-Ara4N-phosphoundecaprenol) from the cytoplasmic to the periplasmic side of the inner membrane. This chain is Probable 4-amino-4-deoxy-L-arabinose-phosphoundecaprenol flippase subunit ArnF, found in Klebsiella pneumoniae subsp. pneumoniae (strain ATCC 700721 / MGH 78578).